The sequence spans 379 residues: Sulfate adenylyltransferase (379 aa).

It belongs to the sulfate adenylyltransferase family.

It catalyses the reaction sulfate + ATP + H(+) = adenosine 5'-phosphosulfate + diphosphate. Its pathway is sulfur metabolism; hydrogen sulfide biosynthesis; sulfite from sulfate: step 1/3. The chain is Sulfate adenylyltransferase from Cenarchaeum symbiosum (strain A).